The primary structure comprises 99 residues: Protein Tat (99 aa).

The segment at Met-1–Cys-22 is disordered. Residues Met-1 to Lys-24 form an interaction with human CREBBP region. The segment at Met-1–Gly-48 is transactivation. Zn(2+) is bound by residues Cys-22, Cys-25, and Cys-27. The interval Cys-22–Cys-37 is cysteine-rich. At Lys-28 the chain carries N6-acetyllysine; by host PCAF. Cys-30, His-33, Cys-34, and Cys-37 together coordinate Zn(2+). The core stretch occupies residues Phe-38 to Gly-48. Residues Gly-48–Pro-99 form a disordered region. The Nuclear localization signal, RNA-binding (TAR), and protein transduction signature appears at Arg-49 to Gly-57. The segment at Arg-49–Glu-86 is interaction with the host capping enzyme RNGTT. An N6-acetyllysine; by host EP300 and GCN5L2 mark is found at Lys-50 and Lys-51. Asymmetric dimethylarginine; by host PRMT6 is present on residues Arg-52 and Arg-53. Lys-71 participates in a covalent cross-link: Glycyl lysine isopeptide (Lys-Gly) (interchain with G-Cter in ubiquitin). The Cell attachment site motif lies at Arg-78 to Asp-80. Positions Gly-83–Ser-93 are enriched in basic and acidic residues.

This sequence belongs to the lentiviruses Tat family. As to quaternary structure, interacts with host CCNT1. Associates with the P-TEFb complex composed at least of Tat, P-TEFb (CDK9 and CCNT1), TAR RNA, RNA Pol II. Recruits the HATs CREBBP, TAF1/TFIID, EP300, PCAF and GCN5L2. Interacts with host KAT5/Tip60; this interaction targets the latter to degradation. Interacts with the host deacetylase SIRT1. Interacts with host capping enzyme RNGTT; this interaction stimulates RNGTT. Binds to host KDR, and to the host integrins ITGAV/ITGB3 and ITGA5/ITGB1. Interacts with host KPNB1/importin beta-1 without previous binding to KPNA1/importin alpha-1. Interacts with EIF2AK2. Interacts with host nucleosome assembly protein NAP1L1; this interaction may be required for the transport of Tat within the nucleus, since the two proteins interact at the nuclear rim. Interacts with host C1QBP/SF2P32; this interaction involves lysine-acetylated Tat. Interacts with the host chemokine receptors CCR2, CCR3 and CXCR4. Interacts with host DPP4/CD26; this interaction may trigger an anti-proliferative effect. Interacts with host LDLR. Interacts with the host extracellular matrix metalloproteinase MMP1. Interacts with host PRMT6; this interaction mediates Tat's methylation. Interacts with, and is ubiquitinated by MDM2/Hdm2. Interacts with host PSMC3 and HTATIP2. Interacts with STAB1; this interaction may overcome SATB1-mediated repression of IL2 and IL2RA (interleukin) in T cells by binding to the same domain than HDAC1. Interacts (when acetylated) with human CDK13, thereby increasing HIV-1 mRNA splicing and promoting the production of the doubly spliced HIV-1 protein Nef. Interacts with host TBP; this interaction modulates the activity of transcriptional pre-initiation complex. Interacts with host RELA. Interacts with host PLSCR1; this interaction negatively regulates Tat transactivation activity by altering its subcellular distribution. In terms of processing, asymmetrical arginine methylation by host PRMT6 seems to diminish the transactivation capacity of Tat and affects the interaction with host CCNT1. Post-translationally, acetylation by EP300, CREBBP, GCN5L2/GCN5 and PCAF regulates the transactivation activity of Tat. EP300-mediated acetylation of Lys-50 promotes dissociation of Tat from the TAR RNA through the competitive binding to PCAF's bromodomain. In addition, the non-acetylated Tat's N-terminus can also interact with PCAF. PCAF-mediated acetylation of Lys-28 enhances Tat's binding to CCNT1. Lys-50 is deacetylated by SIRT1. Polyubiquitination by host MDM2 does not target Tat to degradation, but activates its transactivation function and fosters interaction with CCNT1 and TAR RNA. In terms of processing, phosphorylated by EIF2AK2 on serine and threonine residues adjacent to the basic region important for TAR RNA binding and function. Phosphorylation of Tat by EIF2AK2 is dependent on the prior activation of EIF2AK2 by dsRNA.

The protein localises to the host nucleus. The protein resides in the host nucleolus. Its subcellular location is the host cytoplasm. It localises to the secreted. Transcriptional activator that increases RNA Pol II processivity, thereby increasing the level of full-length viral transcripts. Recognizes a hairpin structure at the 5'-LTR of the nascent viral mRNAs referred to as the transactivation responsive RNA element (TAR) and recruits the cyclin T1-CDK9 complex (P-TEFb complex) that will in turn hyperphosphorylate the RNA polymerase II to allow efficient elongation. The CDK9 component of P-TEFb and other Tat-activated kinases hyperphosphorylate the C-terminus of RNA Pol II that becomes stabilized and much more processive. Other factors such as HTATSF1/Tat-SF1, SUPT5H/SPT5, and HTATIP2 are also important for Tat's function. Besides its effect on RNA Pol II processivity, Tat induces chromatin remodeling of proviral genes by recruiting the histone acetyltransferases (HATs) CREBBP, EP300 and PCAF to the chromatin. This also contributes to the increase in proviral transcription rate, especially when the provirus integrates in transcriptionally silent region of the host genome. To ensure maximal activation of the LTR, Tat mediates nuclear translocation of NF-kappa-B by interacting with host RELA. Through its interaction with host TBP, Tat may also modulate transcription initiation. Tat can reactivate a latently infected cell by penetrating in it and transactivating its LTR promoter. In the cytoplasm, Tat is thought to act as a translational activator of HIV-1 mRNAs. Functionally, extracellular circulating Tat can be endocytosed by surrounding uninfected cells via the binding to several surface receptors such as CD26, CXCR4, heparan sulfate proteoglycans (HSPG) or LDLR. Neurons are rarely infected, but they internalize Tat via their LDLR. Through its interaction with nuclear HATs, Tat is potentially able to control the acetylation-dependent cellular gene expression. Modulates the expression of many cellular genes involved in cell survival, proliferation or in coding for cytokines or cytokine receptors. Tat plays a role in T-cell and neurons apoptosis. Tat induced neurotoxicity and apoptosis probably contribute to neuroAIDS. Circulating Tat also acts as a chemokine-like and/or growth factor-like molecule that binds to specific receptors on the surface of the cells, affecting many cellular pathways. In the vascular system, Tat binds to ITGAV/ITGB3 and ITGA5/ITGB1 integrins dimers at the surface of endothelial cells and competes with bFGF for heparin-binding sites, leading to an excess of soluble bFGF. The protein is Protein Tat of Homo sapiens (Human).